The primary structure comprises 93 residues: UPF0223 protein str0998 (93 aa).

The protein belongs to the UPF0223 family.

This chain is UPF0223 protein str0998, found in Streptococcus thermophilus (strain CNRZ 1066).